We begin with the raw amino-acid sequence, 203 residues long: ATP-dependent Clp protease proteolytic subunit 1 (203 aa).

The active-site Nucleophile is serine 101. Histidine 126 is a catalytic residue.

This sequence belongs to the peptidase S14 family. As to quaternary structure, fourteen ClpP subunits assemble into 2 heptameric rings which stack back to back to give a disk-like structure with a central cavity, resembling the structure of eukaryotic proteasomes.

The protein resides in the cytoplasm. The enzyme catalyses Hydrolysis of proteins to small peptides in the presence of ATP and magnesium. alpha-casein is the usual test substrate. In the absence of ATP, only oligopeptides shorter than five residues are hydrolyzed (such as succinyl-Leu-Tyr-|-NHMec, and Leu-Tyr-Leu-|-Tyr-Trp, in which cleavage of the -Tyr-|-Leu- and -Tyr-|-Trp bonds also occurs).. Its function is as follows. Cleaves peptides in various proteins in a process that requires ATP hydrolysis. Has a chymotrypsin-like activity. Plays a major role in the degradation of misfolded proteins. The chain is ATP-dependent Clp protease proteolytic subunit 1 from Synechococcus sp. (strain JA-3-3Ab) (Cyanobacteria bacterium Yellowstone A-Prime).